A 542-amino-acid chain; its full sequence is Ribulokinase 2 (542 aa).

The protein belongs to the ribulokinase family.

The enzyme catalyses D-ribulose + ATP = D-ribulose 5-phosphate + ADP + H(+). It catalyses the reaction L-ribulose + ATP = L-ribulose 5-phosphate + ADP + H(+). The protein operates within carbohydrate degradation; L-arabinose degradation via L-ribulose; D-xylulose 5-phosphate from L-arabinose (bacterial route): step 2/3. This chain is Ribulokinase 2, found in Staphylococcus saprophyticus subsp. saprophyticus (strain ATCC 15305 / DSM 20229 / NCIMB 8711 / NCTC 7292 / S-41).